The primary structure comprises 231 residues: SrfA-induced gene F protein (231 aa).

The polypeptide is SrfA-induced gene F protein (sigF) (Dictyostelium discoideum (Social amoeba)).